We begin with the raw amino-acid sequence, 393 residues long: CCCH-type zinc finger protein oma-2 (393 aa).

A disordered region spans residues 1 to 26; it reads MDMLKENVIQNNEARTESSVEPSHPD. The span at 14-26 shows a compositional bias: basic and acidic residues; the sequence is ARTESSVEPSHPD. 2 consecutive C3H1-type zinc fingers follow at residues 105 to 133 and 147 to 175; these read SYKTVICQAWLESKTCAFAENCRFAHGEE and KYRTKLCDKYTTTGLCPYGKRCLFIHPDN. Disordered regions lie at residues 227–251 and 311–340; these read TPDEPAANMPLGPTPVSIRGPRYEL and KQSTPGGVSGYSSSGSTPSQDSDSSPLTAA. The span at 313 to 340 shows a compositional bias: low complexity; the sequence is STPGGVSGYSSSGSTPSQDSDSSPLTAA. A Phosphothreonine; by GSK3 modification is found at threonine 327.

Exclusively expressed in the hermaphrodite gonad. Expression only in cellulized oocytes. Widely distributed throughout gonadal oocytes from the mitotic stage to the developing diakinesis stage.

The protein resides in the cytoplasm. It localises to the cytoplasmic granule. It is found in the cytoskeleton. The protein localises to the microtubule organizing center. Its subcellular location is the centrosome. Zinc-finger RNA-binding protein that binds to 5'-UA[AU]-3' motifs in the 3'-UTR of maternal mRNAs to suppress translation in oocytes and embryos. Acts redundantly with oma-1 to control the temporal expression and distribution of maternal proteins and thereby promote meiotic progression, oocyte maturation, fertilization and embryonic development. Also, together with oma-1, is involved in P-granule distribution during embryonic development. The sequence is that of CCCH-type zinc finger protein oma-2 from Caenorhabditis elegans.